A 340-amino-acid chain; its full sequence is Phosphoribosylformylglycinamidine cyclo-ligase (340 aa).

Belongs to the AIR synthase family.

It is found in the cytoplasm. The catalysed reaction is 2-formamido-N(1)-(5-O-phospho-beta-D-ribosyl)acetamidine + ATP = 5-amino-1-(5-phospho-beta-D-ribosyl)imidazole + ADP + phosphate + H(+). It participates in purine metabolism; IMP biosynthesis via de novo pathway; 5-amino-1-(5-phospho-D-ribosyl)imidazole from N(2)-formyl-N(1)-(5-phospho-D-ribosyl)glycinamide: step 2/2. The chain is Phosphoribosylformylglycinamidine cyclo-ligase from Streptococcus pneumoniae serotype 4 (strain ATCC BAA-334 / TIGR4).